We begin with the raw amino-acid sequence, 659 residues long: Pseudouridylate synthase 7 homolog (659 aa).

M1 carries the post-translational modification N-acetylmethionine. 2 stretches are compositionally biased toward polar residues: residues 1 to 10 and 39 to 54; these read MEMTEMTSVS and CPTT…SLPS. The interval 1-99 is disordered; sequence MEMTEMTSVS…EEEEEEAESF (99 aa). Residue S10 is modified to Phosphoserine. Acidic residues predominate over residues 75–98; it reads PSEEEEEEDGLSEEEEEEEEEAES. S125 carries the post-translational modification Phosphoserine. The active-site Nucleophile is D292. Positions 368 to 578 constitute a TRUD domain; the sequence is GFINYYGMQR…SGAYRKIIIR (211 aa).

The protein belongs to the pseudouridine synthase TruD family. Interacts with SIRT1.

It localises to the nucleus. It catalyses the reaction a uridine in tRNA = a pseudouridine in tRNA. It carries out the reaction uridine(13) in tRNA = pseudouridine(13) in tRNA. The enzyme catalyses a uridine in mRNA = a pseudouridine in mRNA. Pseudouridylate synthase that catalyzes pseudouridylation of RNAs. Acts as a regulator of protein synthesis in embryonic stem cells by mediating pseudouridylation of RNA fragments derived from tRNAs (tRFs): pseudouridylated tRFs inhibit translation by targeting the translation initiation complex. Also catalyzes pseudouridylation of mRNAs: mediates pseudouridylation of mRNAs with the consensus sequence 5'-UGUAG-3'. Acts as a regulator of pre-mRNA splicing by mediating pseudouridylation of pre-mRNAs at locations associated with alternatively spliced regions. Pseudouridylation of pre-mRNAs near splice sites directly regulates mRNA splicing and mRNA 3'-end processing. In addition to mRNAs and tRNAs, binds other types of RNAs, such as snRNAs, Y RNAs and vault RNAs, suggesting that it can catalyze pseudouridylation of many RNA types. The protein is Pseudouridylate synthase 7 homolog of Bos taurus (Bovine).